The following is a 380-amino-acid chain: 4-hydroxy-3-methylbut-2-en-1-yl diphosphate synthase (flavodoxin) (380 aa).

Cys279, Cys282, Cys314, and Glu321 together coordinate [4Fe-4S] cluster.

The protein belongs to the IspG family. [4Fe-4S] cluster is required as a cofactor.

The catalysed reaction is (2E)-4-hydroxy-3-methylbut-2-enyl diphosphate + oxidized [flavodoxin] + H2O + 2 H(+) = 2-C-methyl-D-erythritol 2,4-cyclic diphosphate + reduced [flavodoxin]. It functions in the pathway isoprenoid biosynthesis; isopentenyl diphosphate biosynthesis via DXP pathway; isopentenyl diphosphate from 1-deoxy-D-xylulose 5-phosphate: step 5/6. Functionally, converts 2C-methyl-D-erythritol 2,4-cyclodiphosphate (ME-2,4cPP) into 1-hydroxy-2-methyl-2-(E)-butenyl 4-diphosphate. In Tropheryma whipplei (strain TW08/27) (Whipple's bacillus), this protein is 4-hydroxy-3-methylbut-2-en-1-yl diphosphate synthase (flavodoxin).